The primary structure comprises 145 residues: Probable WRKY transcription factor 75 (145 aa).

The segment covering 20–38 (SKPELHQGEEESSKVRSEG) has biased composition (basic and acidic residues). The disordered stretch occupies residues 20-55 (SKPELHQGEEESSKVRSEGCSKSVESSKKKGKKQRY). The WRKY DNA-binding region spans 61 to 126 (SQVDILDDGY…YEGVHSHPIE (66 aa)).

This sequence belongs to the WRKY group II-c family.

The protein localises to the nucleus. In terms of biological role, transcription factor. Interacts specifically with the W box (5'-(T)TGAC[CT]-3'), a frequently occurring elicitor-responsive cis-acting element. This Arabidopsis thaliana (Mouse-ear cress) protein is Probable WRKY transcription factor 75 (WRKY75).